Here is a 179-residue protein sequence, read N- to C-terminus: Large ribosomal subunit protein uL5 (179 aa).

Belongs to the universal ribosomal protein uL5 family. As to quaternary structure, part of the 50S ribosomal subunit; part of the 5S rRNA/L5/L18/L25 subcomplex. Contacts the 5S rRNA and the P site tRNA. Forms a bridge to the 30S subunit in the 70S ribosome.

Functionally, this is one of the proteins that bind and probably mediate the attachment of the 5S RNA into the large ribosomal subunit, where it forms part of the central protuberance. In the 70S ribosome it contacts protein S13 of the 30S subunit (bridge B1b), connecting the 2 subunits; this bridge is implicated in subunit movement. Contacts the P site tRNA; the 5S rRNA and some of its associated proteins might help stabilize positioning of ribosome-bound tRNAs. In Histophilus somni (strain 129Pt) (Haemophilus somnus), this protein is Large ribosomal subunit protein uL5.